A 179-amino-acid chain; its full sequence is Inner membrane-spanning protein YciB (179 aa).

5 helical membrane passes run 22-42, 50-70, 76-96, 121-141, and 149-169; these read IYAA…YSWV, MALI…FFHN, WKVT…QWVM, LAWA…AFWL, and FKVF…GIYI.

This sequence belongs to the YciB family.

Its subcellular location is the cell inner membrane. Functionally, plays a role in cell envelope biogenesis, maintenance of cell envelope integrity and membrane homeostasis. The protein is Inner membrane-spanning protein YciB of Shigella boydii serotype 4 (strain Sb227).